Consider the following 111-residue polypeptide: COX assembly mitochondrial protein (111 aa).

Residues 39–82 (YKKCANFVQAMADCAKANGMKVFPTCDKQRDEMKSCLLFYQTDE) form the CHCH domain. 2 short sequence motifs (cx9C motif) span residues 42-52 (CANFVQAMADC) and 64-74 (CDKQRDEMKSC). Intrachain disulfides connect cysteine 42–cysteine 74 and cysteine 52–cysteine 64.

This sequence belongs to the CMC family.

It localises to the mitochondrion inner membrane. Required for mitochondrial cytochrome c oxidase (COX) assembly and respiration. Binds copper. May be involved in copper trafficking and distribution to mitochondrial COX and SOD1. This is COX assembly mitochondrial protein (CMC1) from Saccharomyces cerevisiae (strain RM11-1a) (Baker's yeast).